Consider the following 341-residue polypeptide: Adenine deaminase (341 aa).

Zn(2+)-binding residues include histidine 24, histidine 26, and histidine 204. Residue glutamate 207 is the Proton donor of the active site. Aspartate 285 contributes to the Zn(2+) binding site. Aspartate 286 lines the substrate pocket.

This sequence belongs to the metallo-dependent hydrolases superfamily. Adenosine and AMP deaminases family. Adenine deaminase type 2 subfamily. It depends on Zn(2+) as a cofactor.

The enzyme catalyses adenine + H2O + H(+) = hypoxanthine + NH4(+). Functionally, catalyzes the hydrolytic deamination of adenine to hypoxanthine. Plays an important role in the purine salvage pathway and in nitrogen catabolism. The polypeptide is Adenine deaminase (Sphingopyxis alaskensis (strain DSM 13593 / LMG 18877 / RB2256) (Sphingomonas alaskensis)).